The primary structure comprises 276 residues: Anamorsin homolog (276 aa).

An N-terminal SAM-like domain region spans residues 1-152 (MEPYVVDNLN…TRGSSIKLPW (152 aa)). The linker stretch occupies residues 152–189 (WAHSDIEAAWENVDNETSYDVDKNLINTNSLLQKSDYV). Cys195, Cys211, Cys214, and Cys216 together coordinate [2Fe-2S] cluster. Residues 195 to 216 (CGQEFAKNSIGKRKRACKNCTC) are fe-S binding site A. The [4Fe-4S] cluster site is built by Cys237, Cys240, Cys248, and Cys251. Short sequence motifs (cx2C motif) lie at residues 237–240 (CGNC) and 248–251 (CSTC). The segment at 237 to 251 (CGNCYLGDAFRCSTC) is fe-S binding site B.

Belongs to the anamorsin family. As to quaternary structure, monomer. [2Fe-2S] cluster serves as cofactor. [4Fe-4S] cluster is required as a cofactor.

It is found in the cytoplasm. The protein resides in the mitochondrion intermembrane space. Component of the cytosolic iron-sulfur (Fe-S) protein assembly (CIA) machinery. Required for the maturation of extramitochondrial Fe-S proteins. Part of an electron transfer chain functioning in an early step of cytosolic Fe-S biogenesis, facilitating the de novo assembly of a [4Fe-4S] cluster on the cytosolic Fe-S scaffold complex. Electrons are transferred from NADPH via a FAD- and FMN-containing diflavin oxidoreductase. Together with the diflavin oxidoreductase, also required for the assembly of the diferric tyrosyl radical cofactor of ribonucleotide reductase (RNR), probably by providing electrons for reduction during radical cofactor maturation in the catalytic small subunit. This chain is Anamorsin homolog, found in Schistosoma japonicum (Blood fluke).